We begin with the raw amino-acid sequence, 549 residues long: Cation/acetate symporter ActP (549 aa).

13 helical membrane-spanning segments follow: residues W33–A53, L77–F97, G103–E123, I148–G168, I183–A203, W206–V226, I262–L282, G303–V323, L355–L375, V404–E424, I428–L448, G464–V484, and I493–F513.

Belongs to the sodium:solute symporter (SSF) (TC 2.A.21) family.

It localises to the cell inner membrane. In terms of biological role, transports acetate. This chain is Cation/acetate symporter ActP, found in Escherichia coli (strain ATCC 8739 / DSM 1576 / NBRC 3972 / NCIMB 8545 / WDCM 00012 / Crooks).